Consider the following 496-residue polypeptide: Glycerol kinase (496 aa).

T11 contacts ADP. The ATP site is built by T11, T12, and S13. T11 contacts sn-glycerol 3-phosphate. R15 contacts ADP. Residues R81, E82, Y133, and D242 each contribute to the sn-glycerol 3-phosphate site. Glycerol-binding residues include R81, E82, Y133, D242, and Q243. ADP is bound by residues T264 and G307. 3 residues coordinate ATP: T264, G307, and Q311. N413 provides a ligand contact to ADP.

This sequence belongs to the FGGY kinase family.

It catalyses the reaction glycerol + ATP = sn-glycerol 3-phosphate + ADP + H(+). Its pathway is polyol metabolism; glycerol degradation via glycerol kinase pathway; sn-glycerol 3-phosphate from glycerol: step 1/1. With respect to regulation, inhibited by fructose 1,6-bisphosphate (FBP). In terms of biological role, key enzyme in the regulation of glycerol uptake and metabolism. Catalyzes the phosphorylation of glycerol to yield sn-glycerol 3-phosphate. The polypeptide is Glycerol kinase (Borrelia duttonii (strain Ly)).